We begin with the raw amino-acid sequence, 76 residues long: Beta-defensin 121 (76 aa).

The first 15 residues, 1 to 15, serve as a signal peptide directing secretion; that stretch reads MKLLLLLLTVTLLLA. Intrachain disulfides connect C23–C50, C30–C44, and C34–C51.

This sequence belongs to the beta-defensin family. In terms of tissue distribution, abundant expression in the male reproductive tract only.

The protein resides in the secreted. In terms of biological role, has antibacterial activity. This is Beta-defensin 121 (DEFB121) from Homo sapiens (Human).